The chain runs to 934 residues: Protein translocase subunit SecA (934 aa).

ATP is bound by residues Gln-87, 105 to 109 (GEGKT), and Asp-515. Zn(2+) is bound by residues Cys-918, Cys-920, Cys-929, and His-930.

This sequence belongs to the SecA family. Monomer and homodimer. Part of the essential Sec protein translocation apparatus which comprises SecA, SecYEG and auxiliary proteins SecDF-YajC and YidC. It depends on Zn(2+) as a cofactor.

It localises to the cell inner membrane. Its subcellular location is the cytoplasm. The enzyme catalyses ATP + H2O + cellular proteinSide 1 = ADP + phosphate + cellular proteinSide 2.. In terms of biological role, part of the Sec protein translocase complex. Interacts with the SecYEG preprotein conducting channel. Has a central role in coupling the hydrolysis of ATP to the transfer of proteins into and across the cell membrane, serving both as a receptor for the preprotein-SecB complex and as an ATP-driven molecular motor driving the stepwise translocation of polypeptide chains across the membrane. The protein is Protein translocase subunit SecA of Ralstonia nicotianae (strain ATCC BAA-1114 / GMI1000) (Ralstonia solanacearum).